Reading from the N-terminus, the 295-residue chain is 4-hydroxy-3-methylbut-2-enyl diphosphate reductase (295 aa).

Cys12 provides a ligand contact to [4Fe-4S] cluster. 2 residues coordinate (2E)-4-hydroxy-3-methylbut-2-enyl diphosphate: His43 and His81. Dimethylallyl diphosphate-binding residues include His43 and His81. Isopentenyl diphosphate contacts are provided by His43 and His81. Cys103 lines the [4Fe-4S] cluster pocket. His131 contacts (2E)-4-hydroxy-3-methylbut-2-enyl diphosphate. His131 provides a ligand contact to dimethylallyl diphosphate. Residue His131 participates in isopentenyl diphosphate binding. Glu133 functions as the Proton donor in the catalytic mechanism. Thr171 provides a ligand contact to (2E)-4-hydroxy-3-methylbut-2-enyl diphosphate. Cys199 is a binding site for [4Fe-4S] cluster. Positions 227, 229, and 272 each coordinate (2E)-4-hydroxy-3-methylbut-2-enyl diphosphate. Dimethylallyl diphosphate contacts are provided by Ser227, Asn229, and Ser272. Ser227, Asn229, and Ser272 together coordinate isopentenyl diphosphate.

The protein belongs to the IspH family. [4Fe-4S] cluster is required as a cofactor.

The enzyme catalyses isopentenyl diphosphate + 2 oxidized [2Fe-2S]-[ferredoxin] + H2O = (2E)-4-hydroxy-3-methylbut-2-enyl diphosphate + 2 reduced [2Fe-2S]-[ferredoxin] + 2 H(+). It carries out the reaction dimethylallyl diphosphate + 2 oxidized [2Fe-2S]-[ferredoxin] + H2O = (2E)-4-hydroxy-3-methylbut-2-enyl diphosphate + 2 reduced [2Fe-2S]-[ferredoxin] + 2 H(+). It functions in the pathway isoprenoid biosynthesis; dimethylallyl diphosphate biosynthesis; dimethylallyl diphosphate from (2E)-4-hydroxy-3-methylbutenyl diphosphate: step 1/1. It participates in isoprenoid biosynthesis; isopentenyl diphosphate biosynthesis via DXP pathway; isopentenyl diphosphate from 1-deoxy-D-xylulose 5-phosphate: step 6/6. In terms of biological role, catalyzes the conversion of 1-hydroxy-2-methyl-2-(E)-butenyl 4-diphosphate (HMBPP) into a mixture of isopentenyl diphosphate (IPP) and dimethylallyl diphosphate (DMAPP). Acts in the terminal step of the DOXP/MEP pathway for isoprenoid precursor biosynthesis. This Symbiobacterium thermophilum (strain DSM 24528 / JCM 14929 / IAM 14863 / T) protein is 4-hydroxy-3-methylbut-2-enyl diphosphate reductase.